The sequence spans 279 residues: Tryptophan synthase alpha chain (279 aa).

Active-site proton acceptor residues include Glu50 and Asp61.

This sequence belongs to the TrpA family. Tetramer of two alpha and two beta chains.

It carries out the reaction (1S,2R)-1-C-(indol-3-yl)glycerol 3-phosphate + L-serine = D-glyceraldehyde 3-phosphate + L-tryptophan + H2O. It participates in amino-acid biosynthesis; L-tryptophan biosynthesis; L-tryptophan from chorismate: step 5/5. The alpha subunit is responsible for the aldol cleavage of indoleglycerol phosphate to indole and glyceraldehyde 3-phosphate. This chain is Tryptophan synthase alpha chain, found in Rhizobium johnstonii (strain DSM 114642 / LMG 32736 / 3841) (Rhizobium leguminosarum bv. viciae).